The sequence spans 138 residues: Large ribosomal subunit protein uL16 (138 aa).

Residues methionine 1–glutamine 13 are compositionally biased toward basic residues. A disordered region spans residues methionine 1–threonine 22.

This sequence belongs to the universal ribosomal protein uL16 family. In terms of assembly, part of the 50S ribosomal subunit.

Its function is as follows. Binds 23S rRNA and is also seen to make contacts with the A and possibly P site tRNAs. This is Large ribosomal subunit protein uL16 from Paraburkholderia phymatum (strain DSM 17167 / CIP 108236 / LMG 21445 / STM815) (Burkholderia phymatum).